Reading from the N-terminus, the 332-residue chain is Tyrosine--tRNA ligase (332 aa).

5 residues coordinate L-tyrosine: Tyr32, Tyr156, Gln160, Asp163, and Gln178. Positions 219-223 match the 'KMSKS' region motif; that stretch reads KMSKS. Lys222 is a binding site for ATP.

This sequence belongs to the class-I aminoacyl-tRNA synthetase family. TyrS type 4 subfamily. Homodimer.

It localises to the cytoplasm. It carries out the reaction tRNA(Tyr) + L-tyrosine + ATP = L-tyrosyl-tRNA(Tyr) + AMP + diphosphate + H(+). Its function is as follows. Catalyzes the attachment of tyrosine to tRNA(Tyr) in a two-step reaction: tyrosine is first activated by ATP to form Tyr-AMP and then transferred to the acceptor end of tRNA(Tyr). In Thermoplasma acidophilum (strain ATCC 25905 / DSM 1728 / JCM 9062 / NBRC 15155 / AMRC-C165), this protein is Tyrosine--tRNA ligase.